The chain runs to 564 residues: NAD-dependent malic enzyme (564 aa).

Catalysis depends on Tyr-104, which acts as the Proton donor. Arg-157 lines the NAD(+) pocket. The active-site Proton acceptor is the Lys-175. A divalent metal cation is bound by residues Glu-246, Asp-247, and Asp-270. NAD(+) contacts are provided by Asp-270 and Asn-417.

This sequence belongs to the malic enzymes family. Homotetramer. Requires Mg(2+) as cofactor. Mn(2+) serves as cofactor.

The enzyme catalyses (S)-malate + NAD(+) = pyruvate + CO2 + NADH. The catalysed reaction is oxaloacetate + H(+) = pyruvate + CO2. This chain is NAD-dependent malic enzyme, found in Aeromonas salmonicida (strain A449).